Reading from the N-terminus, the 445-residue chain is Phosphoglucosamine mutase (445 aa).

The active-site Phosphoserine intermediate is Ser-102. Ser-102, Asp-240, Asp-242, and Asp-244 together coordinate Mg(2+). Ser-102 carries the phosphoserine modification.

This sequence belongs to the phosphohexose mutase family. Mg(2+) is required as a cofactor. Post-translationally, activated by phosphorylation.

The enzyme catalyses alpha-D-glucosamine 1-phosphate = D-glucosamine 6-phosphate. Functionally, catalyzes the conversion of glucosamine-6-phosphate to glucosamine-1-phosphate. The polypeptide is Phosphoglucosamine mutase (Mycolicibacterium vanbaalenii (strain DSM 7251 / JCM 13017 / BCRC 16820 / KCTC 9966 / NRRL B-24157 / PYR-1) (Mycobacterium vanbaalenii)).